The sequence spans 260 residues: BTB/POZ domain-containing protein KCTD21 (260 aa).

A BTB domain is found at 3–72 (DPITLNVGGK…LRTSHLDLPE (70 aa)). Residues 88-112 (QVQPLIEALQEKEVELSKAEKNAML) adopt a coiled-coil conformation.

Homopentamer. Interacts with KCTD11; KCTD21 and KCTD11 may associate in pentameric assemblies. Interacts (via BTB domain) with CUL3; indicative for a participation in a BCR (BTB-CUL3-RBX1) E3 ubiquitin-protein ligase complex. As to expression, highly expressed in cerebellum and brain. Expression is down-regulated in medulloblastoma.

Its pathway is protein modification; protein ubiquitination. Probable substrate-specific adapter of a BCR (BTB-CUL3-RBX1) E3 ubiquitin-protein ligase complex mediating the ubiquitination and subsequent proteasomal degradation of target proteins. Promotes the ubiquitination of HDAC1. Can function as antagonist of the Hedgehog pathway by affecting the nuclear transfer of transcription factor GLI1; the function probably occurs via HDAC1 down-regulation, keeping GLI1 acetylated and inactive. Inhibits cell growth and tumorigenicity of medulloblastoma (MDB). The sequence is that of BTB/POZ domain-containing protein KCTD21 (KCTD21) from Homo sapiens (Human).